The following is a 307-amino-acid chain: 4-hydroxythreonine-4-phosphate dehydrogenase (307 aa).

Residues His-121 and Thr-122 each coordinate substrate. Residues His-150, His-189, and His-245 each contribute to the a divalent metal cation site. 3 residues coordinate substrate: Lys-253, Asn-262, and Arg-271.

This sequence belongs to the PdxA family. In terms of assembly, homodimer. It depends on Zn(2+) as a cofactor. Mg(2+) is required as a cofactor. Co(2+) serves as cofactor.

It localises to the cytoplasm. The catalysed reaction is 4-(phosphooxy)-L-threonine + NAD(+) = 3-amino-2-oxopropyl phosphate + CO2 + NADH. Its pathway is cofactor biosynthesis; pyridoxine 5'-phosphate biosynthesis; pyridoxine 5'-phosphate from D-erythrose 4-phosphate: step 4/5. Functionally, catalyzes the NAD(P)-dependent oxidation of 4-(phosphooxy)-L-threonine (HTP) into 2-amino-3-oxo-4-(phosphooxy)butyric acid which spontaneously decarboxylates to form 3-amino-2-oxopropyl phosphate (AHAP). The chain is 4-hydroxythreonine-4-phosphate dehydrogenase from Sulfurimonas denitrificans (strain ATCC 33889 / DSM 1251) (Thiomicrospira denitrificans (strain ATCC 33889 / DSM 1251)).